A 500-amino-acid chain; its full sequence is MEFGVKSGSPEKQRSACIVVGVFEPRRLSAVAEQLDRVSDGYLSSLLRRGDLEGKTGQMLLLHQVPGVLSERVLLVGCGKERELDERQFKQIIQKTISTLNETGSMEAVCFLTELHVKGRDAYWKVRQAVETAQNSLYTFDQFKTNKAELRRPLRKLVFNVATRRELSIGEKAIAHGLAISNGMKICRDVANMPPNICTPAYLASQARRLADSCQYITTKVIGEQQMAELGMNAYLAVAKGSSNEAMMSVMEYKGHPDAKPIVLVGKGLTFDSGGISIKPAEGMDEMKYDMGGAASVLGTMTALAELKPPINVIGVLAGAENMPDGKAYRPGDILTSMSGQTIEVLNTDAEGRLVLCDVLTYVERFEPESVVDIATLTGACVIALGSHASGLMSNHNPLAHELLNASELSGDKAWRLPLWDEYQEQIESPFADMVNTGGRPAGAITAGAFLSRFTKKYNWAHLDIAGTAWKSGKEKGSTGRPVPLLTQFLLNRAGVEVED.

Positions 267 and 272 each coordinate Mn(2+). Lysine 279 is a catalytic residue. Residues aspartate 290, aspartate 349, and glutamate 351 each coordinate Mn(2+). Arginine 353 is an active-site residue.

The protein belongs to the peptidase M17 family. The cofactor is Mn(2+).

It localises to the cytoplasm. It carries out the reaction Release of an N-terminal amino acid, Xaa-|-Yaa-, in which Xaa is preferably Leu, but may be other amino acids including Pro although not Arg or Lys, and Yaa may be Pro. Amino acid amides and methyl esters are also readily hydrolyzed, but rates on arylamides are exceedingly low.. The enzyme catalyses Release of an N-terminal amino acid, preferentially leucine, but not glutamic or aspartic acids.. Its function is as follows. Presumably involved in the processing and regular turnover of intracellular proteins. Catalyzes the removal of unsubstituted N-terminal amino acids from various peptides. The sequence is that of Probable cytosol aminopeptidase from Tolumonas auensis (strain DSM 9187 / NBRC 110442 / TA 4).